The sequence spans 775 residues: MPVKLRIFLSHGEASCAKEPETFLGSNRVRPMSISNSIKITPELVASHGLKPDEYQRILDLIGREPSFTELGIFSAMWNEHCSYKSSKKWLKTLPTTGPRVIQGPGENAGVVDIDDGDCVVFKMESHNHPSYIEPYQGAATGVGGILRDVFTMGARPIAAMNALRFGAPDHPKTRHLVAGVVAGVGGYGNSFGVPTVGGEVEFDPRYNGNILVNAFAAGLAKSNAIFLSEAKGVGLPVVYLGAKTGRDGVGGATMASAEFDESIEEKRPTVQVGDPFTEKCLLEACLELMKTGAVIAIQDMGAAGLTCSAVEMGAKGDLGIELDLNAVPVREERMTAYEMMLSESQERMLMVLEPSKEEVAKAIFVKWGLDFAIVGKTTDDLRFRVLHNGEEVANLPIKELGDEAPEYDRPWTPAKVPAALSETDIPEADIADALVSLVGSANNSSRRWVYEQYDTLIQGNSLQLPGGDAGVVRVEGHDKKALAFSSDVTPRYVEADAFEGGKQAVAECWRNITATGALPLAATDNLNFGNPEKPEIMSQLVHAIKGIGEACRVLEFPIVSGNVSLYNETNGQAILPTPTIGGVGLLKDWGRMARIRFAAADEVVLLVGAPAGLGTHIAQSVYMRDVHGRTDGPAPHVDLIAEKKNGDFVRGLITEGLTTAVHDCSSGGLALAVAEMAISSGIGATIDAVEGHNPILTFYGEDQARYVLTVKKSDLDKVRAAAKAAGVSCPLIGTTGGSTVKLGTARAVEIKELHLAYESWFPQFMDGETLIAAE.

His-81 is a catalytic residue. The ATP site is built by Tyr-84 and Lys-123. A Mg(2+)-binding site is contributed by Glu-125. Substrate is bound by residues Ser-126 to His-129 and Arg-148. His-127 (proton acceptor) is an active-site residue. Asp-149 contributes to the Mg(2+) binding site. Gln-272 serves as a coordination point for substrate. Asp-300 is a Mg(2+) binding site. Glu-344–Gln-346 serves as a coordination point for substrate. ATP is bound by residues Asp-525 and Gly-562. Residue Asn-563 participates in Mg(2+) binding. Ser-565 contacts substrate.

Belongs to the FGAMS family. In terms of assembly, monomer. Part of the FGAM synthase complex composed of 1 PurL, 1 PurQ and 2 PurS subunits.

It localises to the cytoplasm. The catalysed reaction is N(2)-formyl-N(1)-(5-phospho-beta-D-ribosyl)glycinamide + L-glutamine + ATP + H2O = 2-formamido-N(1)-(5-O-phospho-beta-D-ribosyl)acetamidine + L-glutamate + ADP + phosphate + H(+). Its pathway is purine metabolism; IMP biosynthesis via de novo pathway; 5-amino-1-(5-phospho-D-ribosyl)imidazole from N(2)-formyl-N(1)-(5-phospho-D-ribosyl)glycinamide: step 1/2. In terms of biological role, part of the phosphoribosylformylglycinamidine synthase complex involved in the purines biosynthetic pathway. Catalyzes the ATP-dependent conversion of formylglycinamide ribonucleotide (FGAR) and glutamine to yield formylglycinamidine ribonucleotide (FGAM) and glutamate. The FGAM synthase complex is composed of three subunits. PurQ produces an ammonia molecule by converting glutamine to glutamate. PurL transfers the ammonia molecule to FGAR to form FGAM in an ATP-dependent manner. PurS interacts with PurQ and PurL and is thought to assist in the transfer of the ammonia molecule from PurQ to PurL. This chain is Phosphoribosylformylglycinamidine synthase subunit PurL, found in Agrobacterium fabrum (strain C58 / ATCC 33970) (Agrobacterium tumefaciens (strain C58)).